The sequence spans 132 residues: Small ribosomal subunit protein uS8 (132 aa).

Belongs to the universal ribosomal protein uS8 family. Part of the 30S ribosomal subunit. Contacts proteins S5 and S12.

In terms of biological role, one of the primary rRNA binding proteins, it binds directly to 16S rRNA central domain where it helps coordinate assembly of the platform of the 30S subunit. The polypeptide is Small ribosomal subunit protein uS8 (Streptococcus suis (strain 98HAH33)).